A 396-amino-acid polypeptide reads, in one-letter code: Apolipoprotein A-IV (396 aa).

Positions 1–20 (MFLKAVVLTLALVAVAGARA) are cleaved as a signal peptide. Repeat copies occupy residues 33-54 (DYFS…KSEL), 60-81 (ALFQ…KKLV), 82-103 (PFAT…EEIG), 115-136 (PHAN…QRLE), 137-158 (PYAD…RQLT), 159-180 (PYAQ…ASLR), 181-202 (PHAD…GRLT), 203-224 (PYAD…RSLA), 225-246 (PYAQ…FQMK), 247-268 (KNAE…QRLA), 269-286 (PLAE…EGLQ), 287-308 (KSLA…RRVE), and 309-330 (PYGE…QKLG). Positions 33–330 (DYFSQLSNNA…QMEQLRQKLG (298 aa)) are 13 X 22 AA approximate tandem repeats. Residues 361-396 (KESQDKTLSLPELEQQQEQQQEQQQEQVQMLAPLES) form a disordered region. Positions 374-389 (EQQQEQQQEQQQEQVQ) are enriched in low complexity.

Belongs to the apolipoprotein A1/A4/E family. In terms of assembly, homodimer. In terms of processing, phosphorylation sites are present in the extracellular medium. As to expression, synthesized primarily in the intestine and secreted in plasma.

The protein localises to the secreted. May have a role in chylomicrons and VLDL secretion and catabolism. Required for efficient activation of lipoprotein lipase by ApoC-II; potent activator of LCAT. Apoa-IV is a major component of HDL and chylomicrons. This is Apolipoprotein A-IV from Homo sapiens (Human).